Reading from the N-terminus, the 295-residue chain is Probable alpha-L-glutamate ligase 1 (295 aa).

The ATP-grasp domain maps to 104–287 (MQLLSRKGIG…VANAIIEFIE (184 aa)). ATP is bound by residues lysine 141, 178–179 (EY), aspartate 187, and 211–213 (RSN). Mg(2+)-binding residues include aspartate 248, glutamate 260, and asparagine 262. Mn(2+) contacts are provided by aspartate 248, glutamate 260, and asparagine 262.

It belongs to the RimK family. Mg(2+) is required as a cofactor. It depends on Mn(2+) as a cofactor.

In Shewanella denitrificans (strain OS217 / ATCC BAA-1090 / DSM 15013), this protein is Probable alpha-L-glutamate ligase 1.